The sequence spans 175 residues: Ribosome maturation factor RimM (175 aa).

The region spanning 96–175 (EGDYYWHDLI…TIEVDWDAGF (80 aa)) is the PRC barrel domain.

The protein belongs to the RimM family. In terms of assembly, binds ribosomal protein uS19.

The protein resides in the cytoplasm. Its function is as follows. An accessory protein needed during the final step in the assembly of 30S ribosomal subunit, possibly for assembly of the head region. Essential for efficient processing of 16S rRNA. May be needed both before and after RbfA during the maturation of 16S rRNA. It has affinity for free ribosomal 30S subunits but not for 70S ribosomes. The chain is Ribosome maturation factor RimM from Haemophilus influenzae (strain PittEE).